The primary structure comprises 194 residues: Translation machinery-associated protein 22 (194 aa).

Positions 102–173 (VQIKRVERNK…DVQEWLLELY (72 aa)) constitute an SUI1 domain.

The protein belongs to the DENR family. Interacts with the 40S ribosomal subunit.

The protein resides in the cytoplasm. This Neosartorya fischeri (strain ATCC 1020 / DSM 3700 / CBS 544.65 / FGSC A1164 / JCM 1740 / NRRL 181 / WB 181) (Aspergillus fischerianus) protein is Translation machinery-associated protein 22 (tma22).